Here is a 394-residue protein sequence, read N- to C-terminus: Gastricsin (394 aa).

The signal sequence occupies residues M1–A16. The propeptide at T17–F65 is activation peptide. The region spanning Y79 to A391 is the Peptidase A1 domain. The active site involves D97. Disulfide bonds link C110–C115 and C273–C277. T283 is an active-site residue. C316 and C349 are disulfide-bonded.

The protein belongs to the peptidase A1 family.

Its subcellular location is the secreted. It catalyses the reaction More restricted specificity than pepsin A, but shows preferential cleavage at Tyr-|-Xaa bonds. High activity on hemoglobin.. In terms of biological role, hydrolyzes a variety of proteins. This Cavia porcellus (Guinea pig) protein is Gastricsin (PGC).